Here is a 206-residue protein sequence, read N- to C-terminus: Nucleoside triphosphate pyrophosphatase (206 aa).

The Proton acceptor role is filled by D71.

It belongs to the Maf family. The cofactor is a divalent metal cation.

The protein localises to the cytoplasm. It catalyses the reaction a ribonucleoside 5'-triphosphate + H2O = a ribonucleoside 5'-phosphate + diphosphate + H(+). It carries out the reaction a 2'-deoxyribonucleoside 5'-triphosphate + H2O = a 2'-deoxyribonucleoside 5'-phosphate + diphosphate + H(+). Nucleoside triphosphate pyrophosphatase. May have a dual role in cell division arrest and in preventing the incorporation of modified nucleotides into cellular nucleic acids. The protein is Nucleoside triphosphate pyrophosphatase of Rippkaea orientalis (strain PCC 8801 / RF-1) (Cyanothece sp. (strain PCC 8801)).